Here is a 178-residue protein sequence, read N- to C-terminus: Crossover junction endodeoxyribonuclease RuvC (178 aa).

Residues Asp-11, Glu-71, and Asp-143 contribute to the active site. 3 residues coordinate Mg(2+): Asp-11, Glu-71, and Asp-143.

The protein belongs to the RuvC family. Homodimer which binds Holliday junction (HJ) DNA. The HJ becomes 2-fold symmetrical on binding to RuvC with unstacked arms; it has a different conformation from HJ DNA in complex with RuvA. In the full resolvosome a probable DNA-RuvA(4)-RuvB(12)-RuvC(2) complex forms which resolves the HJ. Mg(2+) serves as cofactor.

The protein resides in the cytoplasm. The catalysed reaction is Endonucleolytic cleavage at a junction such as a reciprocal single-stranded crossover between two homologous DNA duplexes (Holliday junction).. In terms of biological role, the RuvA-RuvB-RuvC complex processes Holliday junction (HJ) DNA during genetic recombination and DNA repair. Endonuclease that resolves HJ intermediates. Cleaves cruciform DNA by making single-stranded nicks across the HJ at symmetrical positions within the homologous arms, yielding a 5'-phosphate and a 3'-hydroxyl group; requires a central core of homology in the junction. The consensus cleavage sequence is 5'-(A/T)TT(C/G)-3'. Cleavage occurs on the 3'-side of the TT dinucleotide at the point of strand exchange. HJ branch migration catalyzed by RuvA-RuvB allows RuvC to scan DNA until it finds its consensus sequence, where it cleaves and resolves the cruciform DNA. This chain is Crossover junction endodeoxyribonuclease RuvC, found in Neisseria meningitidis serogroup B (strain ATCC BAA-335 / MC58).